Here is a 399-residue protein sequence, read N- to C-terminus: Phosphoglycerate kinase (399 aa).

Substrate-binding positions include 22 to 24 (DLN), R37, 60 to 63 (HFGR), R119, and R152. Residues K202, E324, and 354–357 (GGDT) each bind ATP.

It belongs to the phosphoglycerate kinase family. Monomer.

It is found in the cytoplasm. It carries out the reaction (2R)-3-phosphoglycerate + ATP = (2R)-3-phospho-glyceroyl phosphate + ADP. The protein operates within carbohydrate degradation; glycolysis; pyruvate from D-glyceraldehyde 3-phosphate: step 2/5. In Sinorhizobium fredii (strain NBRC 101917 / NGR234), this protein is Phosphoglycerate kinase.